Reading from the N-terminus, the 487-residue chain is uncharacterized protein (487 aa).

Residues 84–125 (DDDENDNENDNENDVENENDVENENDDENENDDDDDENDDDD) are disordered. The stretch at 410–485 (IKEISDKLKC…KLEKNIKKSG (76 aa)) forms a coiled coil.

It belongs to the mimivirus L5 family.

This is an uncharacterized protein from Acanthamoeba polyphaga (Amoeba).